Reading from the N-terminus, the 101-residue chain is Apolipoprotein C-II (101 aa).

Residues 1-22 (MGIRYLLVLVLVLLVLGCEVQG) form the signal peptide. A lipid binding region spans residues 66–74 (TMDEKIREI). The segment at 78 to 101 (STAAVSTYAGIFTDQLLSMLKGDQ) is lipoprotein lipase cofactor.

The protein belongs to the apolipoprotein C2 family. Post-translationally, proapolipoprotein C-II is synthesized as a sialic acid containing glycoprotein which is subsequently desialylated prior to its proteolytic processing. Proapolipoprotein C-II, the major form found in plasma undergoes proteolytic cleavage of its N-terminal hexapeptide to generate apolipoprotein C-II, which occurs as the minor form in plasma.

It is found in the secreted. Its function is as follows. Component of chylomicrons, very low-density lipoproteins (VLDL), low-density lipoproteins (LDL), and high-density lipoproteins (HDL) in plasma. Plays an important role in lipoprotein metabolism as an activator of lipoprotein lipase. Both proapolipoprotein C-II and apolipoprotein C-II can activate lipoprotein lipase. The chain is Apolipoprotein C-II (APOC2) from Phoca vitulina (Harbor seal).